A 232-amino-acid polypeptide reads, in one-letter code: Protein Mis18-alpha (232 aa).

Serine 36, serine 39, and serine 40 each carry phosphoserine. The Mis18 domain maps to 79 to 177 (PLVFLCSGCR…SVEAIESYVL (99 aa)). 4 residues coordinate Zn(2+): cysteine 84, cysteine 87, cysteine 140, and cysteine 143. Lysine 161 is covalently cross-linked (Glycyl lysine isopeptide (Lys-Gly) (interchain with G-Cter in SUMO2)). Serine 232 bears the Phosphoserine mark.

The protein belongs to the mis18 family. In terms of assembly, homodimer, and heterodimer with OIP5/MIS18B. Identified in a complex containing MIS18A, OIP5/MIS18B, MIS18BP1, RBBP7 and RBBP4.

The protein localises to the nucleus. Its subcellular location is the chromosome. It is found in the centromere. Its function is as follows. Required for recruitment of CENPA to centromeres and normal chromosome segregation during mitosis. The chain is Protein Mis18-alpha (MIS18A) from Pan troglodytes (Chimpanzee).